Here is a 200-residue protein sequence, read N- to C-terminus: NADH-quinone oxidoreductase subunit C (200 aa).

The protein belongs to the complex I 30 kDa subunit family. In terms of assembly, NDH-1 is composed of 14 different subunits. Subunits NuoB, C, D, E, F, and G constitute the peripheral sector of the complex.

The protein localises to the cell inner membrane. It catalyses the reaction a quinone + NADH + 5 H(+)(in) = a quinol + NAD(+) + 4 H(+)(out). Its function is as follows. NDH-1 shuttles electrons from NADH, via FMN and iron-sulfur (Fe-S) centers, to quinones in the respiratory chain. The immediate electron acceptor for the enzyme in this species is believed to be ubiquinone. Couples the redox reaction to proton translocation (for every two electrons transferred, four hydrogen ions are translocated across the cytoplasmic membrane), and thus conserves the redox energy in a proton gradient. In Ralstonia nicotianae (strain ATCC BAA-1114 / GMI1000) (Ralstonia solanacearum), this protein is NADH-quinone oxidoreductase subunit C.